The primary structure comprises 736 residues: Dimethylamine dehydrogenase (736 aa).

Cys-31 carries the post-translational modification S-6-FMN cysteine. 176–179 (YGAH) serves as a coordination point for substrate. Tyr-181 (proton donor) is an active-site residue. The FMN site is built by Arg-229 and Arg-329. Cys-352, Cys-355, Cys-358, and Cys-371 together coordinate [4Fe-4S] cluster. 398–427 (DVLIVGAGPAGSECARVLMERGYTVHLVDT) contributes to the ADP binding site.

In the N-terminal section; belongs to the NADH:flavin oxidoreductase/NADH oxidase family. It depends on FMN as a cofactor. [4Fe-4S] cluster serves as cofactor.

It carries out the reaction dimethylamine + oxidized [electron-transfer flavoprotein] + H2O + H(+) = methylamine + reduced [electron-transfer flavoprotein] + formaldehyde. This is Dimethylamine dehydrogenase (dmd) from Hyphomicrobium sp. (strain x).